The primary structure comprises 208 residues: Somatotropin-B (208 aa).

The first 25 residues, 1 to 25 (MVPGSCSSFGLLVILSFQNVPDVGG), serve as a signal peptide directing secretion. Position 44 (His44) interacts with Zn(2+). An intrachain disulfide couples Cys77 to Cys181. Zn(2+) is bound at residue Glu190. A disulfide bond links Cys198 and Cys206.

It belongs to the somatotropin/prolactin family.

Its subcellular location is the secreted. In terms of biological role, growth hormone plays an important role in growth control. The sequence is that of Somatotropin-B (gh-b) from Xenopus laevis (African clawed frog).